The primary structure comprises 149 residues: 2S seed storage albumin protein (149 aa).

An N-terminal signal peptide occupies residues 1–22 (MKLFIILATATLLIAATQATYP). Disulfide bonds link Cys38–Cys98, Cys52–Cys87, Cys88–Cys133, and Cys100–Cys140. The igE-binding stretch occupies residues 121–128 (EGVRDLKE).

The protein belongs to the 2S seed storage albumins family. In terms of tissue distribution, expressed in seeds (at protein level).

Seed storage protein. This chain is 2S seed storage albumin protein, found in Fagopyrum esculentum (Common buckwheat).